Reading from the N-terminus, the 456-residue chain is MPPSKDQPNILRGPGDYEVTTRVHNDTYPEIDPRLLNLQGKSVFVTGGSRGLGRSMALSFAKAGVSKIAVGARSSLESLAKEIAEACVNPPEFLPVKLDVTDEASVAAAATEVGRAFGQLNVLVNNAGILGKYGLIADSDPEEWWEVLNVNLRGPYLVTRAFVPLLLKASKDDIRYIVNVCSVGAHLTNPTLSSYQVSKNALLKLTTLTNAEYGPGVITFAIHPGNSPTDIMGGPEAIPPHHKHVFVETPELSGDSVVFLVSKRREWLGGRYINCTWDLPELVSKEAEICIPVGLYQAKEYVDIPFNGLRPEIDTAFQGRKQRTPEQARRAQLAKYNVVKGGMDNRRDSQIFIRIKRSTKHNPRLVRLVGNKSRPATSGICRVDFFDCTAQKQRDKAQWQSLKLSKAQVTGSVVTHLTQILSGNSQRTAGIQRARELGQIIWPLAAEQSDSGNSLP.

7 residues coordinate NADP(+): valine 45, aspartate 99, asparagine 126, arginine 160, tyrosine 195, lysine 199, and threonine 229. The Proton donor role is filled by tyrosine 195. Lysine 199 acts as the Lowers pKa of active site Tyr in catalysis.

This sequence belongs to the short-chain dehydrogenases/reductases (SDR) family.

The protein operates within secondary metabolite biosynthesis. Short chain dehydrogenase; part of the gene cluster that mediates the biosynthesis of azaterrilone A and other azaphilones, a class of fungal metabolites characterized by a highly oxygenated pyrano-quinone bicyclic core and exhibiting a broad range of bioactivities. The first step of the pathway begins with the non-reducing polyketide synthase tazA that assembles one acetyl-CoA starter unit, five malonyl-CoA units, and catalyzes a series of Claisen condensations, methylation, PT-mediated cyclization, and finally releases the first hexaketide precursor through the R-domain. The tazA product then undergoes reduction on its terminal ketone and the following pyran-ring formation by yet undetermined enzyme(s). Dehydration and enoyl reduction, possibly involving the trans-enoyl reductase tazE leads to the next intermediate. TazD is predicted as an acetyltransferase and might catalyze the acetylation steps leading to the synthesis of azaterrilone A. Azaterrilone A is not the final product of the taz pathway and both the highly reducing polyketide synthase tazB and the dual enzyme tazHJ catalyze late steps of the pathway, leading to the production of the 2 final stereoisomers that contain additional polyketide modification whose structures have still to be determined. The sequence is that of Short chain dehydrogenase tazN from Aspergillus terreus (strain NIH 2624 / FGSC A1156).